We begin with the raw amino-acid sequence, 173 residues long: Alpha-crystallin A chain (173 aa).

Methionine 1 is modified (N-acetylmethionine). The segment at 1-63 (MDVTIQHPWF…RTVLDSGVSE (63 aa)) is required for complex formation with BFSP1 and BFSP2. The residue at position 6 (glutamine 6) is a Deamidated glutamine; partial. Position 45 is a phosphoserine (serine 45). A Deamidated glutamine; partial modification is found at glutamine 50. Positions 52 to 162 (LFRTVLDSGV…GHSERAIPVS (111 aa)) constitute a sHSP domain. Lysine 70 carries the post-translational modification N6-acetyllysine. Position 90 is a deamidated glutamine; partial (glutamine 90). Lysine 99 is subject to N6-acetyllysine. Histidine 100 provides a ligand contact to Zn(2+). Asparagine 101 carries the deamidated asparagine; partial modification. Glutamate 102 and histidine 107 together coordinate Zn(2+). At serine 122 the chain carries Phosphoserine. Deamidated asparagine; partial is present on asparagine 123. Residues 145–173 (KVQSGLDAGHSERAIPVSREEKPSSAPSS) form a disordered region. Deamidated glutamine; partial is present on glutamine 147. Residues 153–167 (GHSERAIPVSREEKP) show a composition bias toward basic and acidic residues. Position 154 (histidine 154) interacts with Zn(2+). The O-linked (GlcNAc) serine glycan is linked to serine 162.

It belongs to the small heat shock protein (HSP20) family. As to quaternary structure, heteromer composed of three CRYAA and one CRYAB subunits. Inter-subunit bridging via zinc ions enhances stability, which is crucial as there is no protein turn over in the lens. Can also form homodimers and homotetramers (dimers of dimers) which serve as the building blocks of homooligomers. Within homooligomers, the zinc-binding motif is created from residues of 3 different molecules. His-100 and Glu-102 from one molecule are ligands of the zinc ion, and His-107 and His-154 residues from additional molecules complete the site with tetrahedral coordination geometry. Part of a complex required for lens intermediate filament formation composed of BFSP1, BFSP2 and CRYAA. Post-translationally, acetylation at Lys-70 may increase chaperone activity. In terms of processing, undergoes age-dependent proteolytical cleavage at the C-terminus.

The protein localises to the cytoplasm. It is found in the nucleus. Contributes to the transparency and refractive index of the lens. Acts as a chaperone, preventing aggregation of various proteins under a wide range of stress conditions. Required for the correct formation of lens intermediate filaments as part of a complex composed of BFSP1, BFSP2 and CRYAA. The sequence is that of Alpha-crystallin A chain (CRYAA) from Eulemur fulvus fulvus (Brown lemur).